Reading from the N-terminus, the 179-residue chain is Peptide deformylase (179 aa).

Fe cation-binding residues include Cys102 and His144. The active site involves Glu145. His148 contributes to the Fe cation binding site.

Belongs to the polypeptide deformylase family. The cofactor is Fe(2+).

It carries out the reaction N-terminal N-formyl-L-methionyl-[peptide] + H2O = N-terminal L-methionyl-[peptide] + formate. Its function is as follows. Removes the formyl group from the N-terminal Met of newly synthesized proteins. Requires at least a dipeptide for an efficient rate of reaction. N-terminal L-methionine is a prerequisite for activity but the enzyme has broad specificity at other positions. The protein is Peptide deformylase of Wolbachia pipientis wMel.